We begin with the raw amino-acid sequence, 347 residues long: MTSDGTPTQSGRYPAGGHAFPHGSLTGIAQLERHEILYLLDEAEQWVDFNRQSEKHCDLLAGLTIINAFFENSTRTLLSFEIAGKRLGADVVNMHAAQSSVKKGETLIDTAITLNAMRADAIVIRHGSSGAVDLIASKVDCPVLNAGDGQHEHPTQALLDALALRHALEARGEGSEDFTGLTITICGDILHSRVARSNILCLQAMGASVRVCAPPALMPVGIERMGAEPFHDFDAALKGCDVAMMLRLQTERMSGQFIPSAREYHHLYGLTQHRLQRCAPDALVMHPGPMNRGVEIDSDVADMLDRSIITRQVEMGVAVRMACLDILTRKGRGLPGWQGDLGKGQWA.

Arg-75 and Thr-76 together coordinate carbamoyl phosphate. Lys-103 provides a ligand contact to L-aspartate. 3 residues coordinate carbamoyl phosphate: Arg-125, His-153, and Gln-156. L-aspartate-binding residues include Arg-193 and Arg-247. Carbamoyl phosphate is bound by residues Gly-288 and Pro-289.

The protein belongs to the aspartate/ornithine carbamoyltransferase superfamily. ATCase family. As to quaternary structure, heterododecamer (2C3:3R2) of six catalytic PyrB chains organized as two trimers (C3), and six regulatory PyrI chains organized as three dimers (R2).

It catalyses the reaction carbamoyl phosphate + L-aspartate = N-carbamoyl-L-aspartate + phosphate + H(+). It functions in the pathway pyrimidine metabolism; UMP biosynthesis via de novo pathway; (S)-dihydroorotate from bicarbonate: step 2/3. Its function is as follows. Catalyzes the condensation of carbamoyl phosphate and aspartate to form carbamoyl aspartate and inorganic phosphate, the committed step in the de novo pyrimidine nucleotide biosynthesis pathway. This Erythrobacter litoralis (strain HTCC2594) protein is Aspartate carbamoyltransferase catalytic subunit.